The following is a 327-amino-acid chain: Tumor necrosis factor receptor superfamily member 6 (327 aa).

The N-terminal stretch at 1–21 (MLWIWAVLPLVLAGSQLRVHT) is a signal peptide. The Extracellular portion of the chain corresponds to 22 to 169 (QGTNSISESL…NCRKQSPRNR (148 aa)). A glycan (N-linked (GlcNAc...) asparagine) is linked at Asn43. TNFR-Cys repeat units lie at residues 43-79 (NCSEGLYQGGPFCCQPCQPGKKKVEDCKMNGGTPTCA), 80-123 (PCTE…NTKC), and 124-162 (KCKPDFYCDSPGCEHCVRCASCEHGTLEPCTATSNTNCR). Intrachain disulfides connect Cys44–Cys55, Cys56–Cys69, Cys59–Cys78, Cys81–Cys97, Cys100–Cys115, Cys103–Cys123, Cys125–Cys139, Cys142–Cys153, and Cys145–Cys161. N-linked (GlcNAc...) asparagine glycosylation is present at Asn114. A helical membrane pass occupies residues 170 to 186 (LWLLTILVLLIPLVFIY). At 187-327 (RKYRKRKCWK…GNENEGQCLE (141 aa)) the chain is on the cytoplasmic side. A lipid anchor (S-palmitoyl cysteine) is attached at Cys194. Residues 204–309 (SRTSSRETIP…DKFQDMVQKD (106 aa)) are interaction with HIPK3. Residue Thr206 is modified to Phosphothreonine. Phosphoserine is present on residues Ser217 and Ser220. Positions 222–246 (SKYIPRIAEDMTIQEAKKFARENNI) are interaction with CALM. One can recognise a Death domain in the interval 222 to 306 (SKYIPRIAED…RTLDKFQDMV (85 aa)). A disordered region spans residues 308-327 (KDLGKSTPDTGNENEGQCLE). Thr314 is subject to Phosphothreonine. Positions 314–327 (TPDTGNENEGQCLE) are enriched in polar residues.

Component of the death-induced signaling complex (DISC) composed of cell surface receptor FAS/CD95, adapter protein FADD and the CASP8 protease; recruitment of CASP8 to the complex is required for processing of CASP8 into the p18 and p10 subunits. Interacts directly (via DED domain) with NOL3 (via CARD domain); inhibits death-inducing signaling complex (DISC) assembly by inhibiting the increase in FAS-FADD binding induced by FAS activation. Binds DAXX. Interacts with HIPK3. Part of a complex containing HIPK3 and FADD. Binds RIPK1 and FAIM2. Interacts with BABAM2 and FEM1B. Interacts with CALM. In the absence of stimulation, interacts with BIRC2, DDX3X and GSK3B. The interaction with BIRC2 and DDX3X is further enhanced upon receptor stimulation and accompanied by DDX3X and BIRC2 cleavage. Post-translationally, palmitoylated. Palmitoylation by ZDHHC7 prevents the lysosomal degradation of FAS regulating its expression at the plasma membrane. As to expression, detected in various tissues including thymus, liver, lung, heart, and adult ovary.

The protein resides in the cell membrane. It localises to the membrane raft. Functionally, receptor for TNFSF6/FASLG. The adapter molecule FADD recruits caspase CASP8 to the activated receptor. The resulting death-inducing signaling complex (DISC) performs CASP8 proteolytic activation which initiates the subsequent cascade of caspases (aspartate-specific cysteine proteases) mediating apoptosis. FAS-mediated apoptosis may have a role in the induction of peripheral tolerance, in the antigen-stimulated suicide of mature T-cells, or both. The sequence is that of Tumor necrosis factor receptor superfamily member 6 (Fas) from Mus musculus (Mouse).